Here is a 457-residue protein sequence, read N- to C-terminus: Phosphoglucosamine mutase (457 aa).

Ser106 serves as the catalytic Phosphoserine intermediate. The Mg(2+) site is built by Ser106, Asp245, Asp247, and Asp249. Residue Ser106 is modified to Phosphoserine.

The protein belongs to the phosphohexose mutase family. The cofactor is Mg(2+). Post-translationally, activated by phosphorylation.

It carries out the reaction alpha-D-glucosamine 1-phosphate = D-glucosamine 6-phosphate. Its function is as follows. Catalyzes the conversion of glucosamine-6-phosphate to glucosamine-1-phosphate. This is Phosphoglucosamine mutase from Methylibium petroleiphilum (strain ATCC BAA-1232 / LMG 22953 / PM1).